An 875-amino-acid chain; its full sequence is Probable dipeptidyl-aminopeptidase B (875 aa).

Residues 1-90 (MSEPKPIQDT…ASSETTPPRK (90 aa)) are disordered. Residues 1-98 (MSEPKPIQDT…RKGVDRKLKK (98 aa)) are Cytoplasmic-facing. The segment covering 19–28 (SSISSASTTS) has biased composition (low complexity). Positions 33-46 (RLAEESEKNHDASS) are enriched in basic and acidic residues. A helical; Signal-anchor for type II membrane protein membrane pass occupies residues 99 to 119 (VLLIVGGFFVAAWIVSLVVFL). The Vacuolar segment spans residues 120 to 875 (TNKSYKHGSQ…VNDAKPKIES (756 aa)). N-linked (GlcNAc...) asparagine glycosylation is found at N354 and N567. Positions 689-715 (VDFQSSDGGRRTTRSPRRATGRPSATS) are disordered. The span at 699-708 (RTTRSPRRAT) shows a compositional bias: basic residues. The Charge relay system role is filled by S726. A glycan (N-linked (GlcNAc...) asparagine) is linked at N785. Catalysis depends on charge relay system residues D803 and H836.

The protein belongs to the peptidase S9B family.

Its subcellular location is the vacuole membrane. It carries out the reaction Release of an N-terminal dipeptide, Xaa-Yaa-|-Zaa-, from a polypeptide, preferentially when Yaa is Pro, provided Zaa is neither Pro nor hydroxyproline.. Functionally, type IV dipeptidyl-peptidase which removes N-terminal dipeptides sequentially from polypeptides having unsubstituted N-termini provided that the penultimate residue is proline. This Verticillium alfalfae (strain VaMs.102 / ATCC MYA-4576 / FGSC 10136) (Verticillium wilt of alfalfa) protein is Probable dipeptidyl-aminopeptidase B (DAPB).